A 634-amino-acid chain; its full sequence is Acetylcholinesterase (634 aa).

The N-terminal stretch at 1 to 23 (MKTSDILLLPTVLLTFLFHNCFA) is a signal peptide. A disulfide bond links C91 and C118. N-linked (GlcNAc...) asparagine glycans are attached at residues N133 and N184. S225 functions as the Acyl-ester intermediate in the catalytic mechanism. The cysteines at positions 279 and 290 are disulfide-linked. An N-linked (GlcNAc...) asparagine glycan is attached at N283. Catalysis depends on E352, which acts as the Charge relay system. N368 carries an N-linked (GlcNAc...) asparagine glycan. C427 and C580 are oxidised to a cystine. Catalysis depends on H495, which acts as the Charge relay system. Residues N512 and N592 are each glycosylated (N-linked (GlcNAc...) asparagine).

Belongs to the type-B carboxylesterase/lipase family. In terms of assembly, dimers and collagen-tailed forms, in which catalytic tetramers are associated with anchoring proteins that attach them to the basal lamina or to cell membranes. In the collagen-tailed forms, subunits are associated with a specific collagen, COLQ, which triggers the formation of isoform T tetramers from dimers.

It localises to the synapse. Its subcellular location is the secreted. The protein resides in the cell membrane. The enzyme catalyses acetylcholine + H2O = choline + acetate + H(+). Its function is as follows. Terminates signal transduction at the neuromuscular junction by rapid hydrolysis of the acetylcholine released into the synaptic cleft. The polypeptide is Acetylcholinesterase (ache) (Danio rerio (Zebrafish)).